Consider the following 266-residue polypeptide: Putative carbamate hydrolase RutD (266 aa).

This sequence belongs to the AB hydrolase superfamily. Hydrolase RutD family.

The catalysed reaction is carbamate + 2 H(+) = NH4(+) + CO2. Involved in pyrimidine catabolism. May facilitate the hydrolysis of carbamate, a reaction that can also occur spontaneously. The protein is Putative carbamate hydrolase RutD of Escherichia coli O150:H5 (strain SE15).